The sequence spans 406 residues: Putative cfxQ-like protein R730 (406 aa).

The tract at residues 1-37 is disordered; it reads MKRSHDSITRSINSDNDSETNMNSDNNNNNKPNQRKK. Low complexity predominate over residues 13–32; it reads NSDNDSETNMNSDNNNNNKP. 173–180 serves as a coordination point for ATP; that stretch reads GPPGVGKS.

This sequence belongs to the CbxX/CfxQ family.

This chain is Putative cfxQ-like protein R730, found in Acanthamoeba polyphaga mimivirus (APMV).